The sequence spans 307 residues: Elongation factor Ts (307 aa).

The interval 80-83 (TDFV) is involved in Mg(2+) ion dislocation from EF-Tu.

It belongs to the EF-Ts family.

Its subcellular location is the cytoplasm. Associates with the EF-Tu.GDP complex and induces the exchange of GDP to GTP. It remains bound to the aminoacyl-tRNA.EF-Tu.GTP complex up to the GTP hydrolysis stage on the ribosome. The sequence is that of Elongation factor Ts from Methylobacterium nodulans (strain LMG 21967 / CNCM I-2342 / ORS 2060).